Reading from the N-terminus, the 316-residue chain is Transaldolase B (316 aa).

The Schiff-base intermediate with substrate role is filled by lysine 131.

Belongs to the transaldolase family. Type 1 subfamily. As to quaternary structure, homodimer.

It is found in the cytoplasm. The catalysed reaction is D-sedoheptulose 7-phosphate + D-glyceraldehyde 3-phosphate = D-erythrose 4-phosphate + beta-D-fructose 6-phosphate. It participates in carbohydrate degradation; pentose phosphate pathway; D-glyceraldehyde 3-phosphate and beta-D-fructose 6-phosphate from D-ribose 5-phosphate and D-xylulose 5-phosphate (non-oxidative stage): step 2/3. Its function is as follows. Transaldolase is important for the balance of metabolites in the pentose-phosphate pathway. The sequence is that of Transaldolase B (talB) from Pasteurella multocida (strain Pm70).